The sequence spans 467 residues: MEYRSHISVMGPVVDVKFKSGQYPESINALKSTSRVRQNAVDVTVTLEVAIALGDDSVRTVAMGSTDGLYVYRGTDTGAPISVPVGEATLGRVFNVLGEAIDLGEPVAADDKRDPIHREAPKFEELSTTTEILETGIKVVDLLAPYIIGGKIGLFGGAGVGKTVLIQELINNIAQEHGVISVFAGVGERTREGNDLYHEMTDSGVIKKSAMVFGQMNEPPGARMAVALSGLTMAEHFRDRDGQDVLLFVDNISFTQAGSEVSALLGRMPSAVGYQPTLATEMGQLQERITSTKVGSVTSIQAIYVPADDYTDPAPATTFAHLDATTNLERKLSEMGIYPAVDPLASTSRALSPEIVGEEHYSVARQVQQTLQKYKELQDIIAILGMDELSEEDKLVVHRARRIQFFLSQNFHVAEQFTGQKGSYVPVKETIKGFKESLDGKYDDLPEDAFRLVGRIEEVIEKGKQTA.

ATP is bound at residue 156-163 (GGAGVGKT).

Belongs to the ATPase alpha/beta chains family. In terms of assembly, F-type ATPases have 2 components, CF(1) - the catalytic core - and CF(0) - the membrane proton channel. CF(1) has five subunits: alpha(3), beta(3), gamma(1), delta(1), epsilon(1). CF(0) has three main subunits: a(1), b(2) and c(9-12). The alpha and beta chains form an alternating ring which encloses part of the gamma chain. CF(1) is attached to CF(0) by a central stalk formed by the gamma and epsilon chains, while a peripheral stalk is formed by the delta and b chains.

The protein localises to the cell membrane. The catalysed reaction is ATP + H2O + 4 H(+)(in) = ADP + phosphate + 5 H(+)(out). Functionally, produces ATP from ADP in the presence of a proton gradient across the membrane. The catalytic sites are hosted primarily by the beta subunits. The protein is ATP synthase subunit beta of Cytobacillus firmus (Bacillus firmus).